Reading from the N-terminus, the 477-residue chain is V-type ATP synthase beta chain (477 aa).

It belongs to the ATPase alpha/beta chains family.

Its function is as follows. Produces ATP from ADP in the presence of a proton gradient across the membrane. The V-type beta chain is a regulatory subunit. The protein is V-type ATP synthase beta chain of Anaeromyxobacter sp. (strain K).